A 473-amino-acid chain; its full sequence is Ribosomal RNA small subunit methyltransferase F (473 aa).

S-adenosyl-L-methionine contacts are provided by residues 124–130 (ASAPGSK), glutamate 148, aspartate 175, and aspartate 193. The active-site Nucleophile is the cysteine 246.

This sequence belongs to the class I-like SAM-binding methyltransferase superfamily. RsmB/NOP family.

Its subcellular location is the cytoplasm. It carries out the reaction cytidine(1407) in 16S rRNA + S-adenosyl-L-methionine = 5-methylcytidine(1407) in 16S rRNA + S-adenosyl-L-homocysteine + H(+). Functionally, specifically methylates the cytosine at position 1407 (m5C1407) of 16S rRNA. In Aliivibrio salmonicida (strain LFI1238) (Vibrio salmonicida (strain LFI1238)), this protein is Ribosomal RNA small subunit methyltransferase F.